The primary structure comprises 444 residues: NAD(+)--protein-arginine ADP-ribosyltransferase Tre1 (444 aa).

The segment at 72–140 is PAAR domain; that stretch reads PRHVTGVLAD…NDLLACSAEI (69 aa). Residues 266–444 enclose the TR mART core domain; sequence MTLAEAVGQE…TTHLLYREIP (179 aa). Residues 274–444 form an ART domain region; sequence QEQAKVWTQT…TTHLLYREIP (171 aa). Residues R356, S381, and E415 contribute to the active site.

Belongs to the Arg-specific ADP-ribosyltransferase family. In terms of assembly, forms a stable complex with cognate immunity protein Tri1-Sp.

It is found in the secreted. The protein resides in the host cytoplasm. It carries out the reaction L-arginyl-[protein] + NAD(+) = N(omega)-(ADP-D-ribosyl)-L-arginyl-[protein] + nicotinamide + H(+). Its function is as follows. Toxic component of a contact-dependent interbacterial competition system (also called effector-immunity systems). Acts by ADP-ribosylating a number of target proteins in target cells; E.coli target proteins include FtsZ, EFTu, RNase E, Fis, RL9, SucB, and LolD. FtsZ is thought to be the physiologically relevant target as it is ADP-ribosylated on a critical residue. ADP-ribosylation of FtsZ prevents formation of the FtsZ mid-cell ring and inhibits cell division. Overexpression of the whole Tre1 protein or the ART domain in E.coli is toxic; cells elongate dramatically and some undergo lysis. Toxic activity is neutralized by coexpression of the cognate immunity protein Tri1-Sp; Tri1-Sp neutralizes this protein both by binding to and occluding the active site (via Tri1's N-terminal extension) and by hydrolysis of the ADP-ribosyl moiety from the target protein. Tre1 can also be neutralized by non-cognate immunity protein Tri1-Pp from P.putida strain GB-1, with which it does not form a stable complex; DraG of R.palustris does not neutralize the toxic effects of this protein. In interbacterial competition studies Tri1 from P.putida strain B6-2 also neutralizes this protein. The sequence is that of NAD(+)--protein-arginine ADP-ribosyltransferase Tre1 from Serratia proteamaculans (strain 568).